Consider the following 60-residue polypeptide: Ribosome-inactivating protein dianthin-32 (60 aa).

Belongs to the ribosome-inactivating protein family. Type 1 RIP subfamily.

The enzyme catalyses Endohydrolysis of the N-glycosidic bond at one specific adenosine on the 28S rRNA.. In terms of biological role, single-chain ribosome-inactivating protein. The chain is Ribosome-inactivating protein dianthin-32 from Dianthus caryophyllus (Carnation).